Consider the following 439-residue polypeptide: Homeobox protein ceh-32 (439 aa).

Residues 183-243 constitute a DNA-binding region (homeobox); the sequence is WDGEQKTHCF…KNRRQRDRAA (61 aa). 3 disordered regions span residues 253-293, 344-365, and 379-439; these read GVEL…SHIP, EEEN…KKRS, and VSPS…SQSE. Composition is skewed to acidic residues over residues 264–274 and 344–358; these read SDSDDDFEDSM and EEEN…EADI. Over residues 379 to 392 the composition is skewed to polar residues; the sequence is VSPSQCSPCSNESL. Positions 398 to 428 are enriched in basic and acidic residues; it reads VKTEEVKKEDDEAAEEDSRSVKSETSEDPKH.

This sequence belongs to the SIX/Sine oculis homeobox family. In terms of assembly, interacts with gmn-1. Expressed in the posterior gonad. Expressed in some cells in the head that are probably neurons. Expressed in the dorsal and ventral neuron RMD pair and the inner labial neuron class IL1. Not expressed in BAG neurons.

Its subcellular location is the nucleus. In terms of biological role, transcription factor which binds a motif with the core sequence 5'-GTATCA-3'. Plays a role in head morphogenesis. Involved in embryonic development. Required for cell specification of the RIA interneurons. May cooperate with the transcription factor vab-3 and phosphatase eya-1 to repress transcription factor ets-5 expression in non BAG neuronal cells. The protein is Homeobox protein ceh-32 of Caenorhabditis elegans.